The primary structure comprises 98 residues: Co-chaperonin GroES (98 aa).

Belongs to the GroES chaperonin family. In terms of assembly, heptamer of 7 subunits arranged in a ring. Interacts with the chaperonin GroEL.

The protein resides in the cytoplasm. In terms of biological role, together with the chaperonin GroEL, plays an essential role in assisting protein folding. The GroEL-GroES system forms a nano-cage that allows encapsulation of the non-native substrate proteins and provides a physical environment optimized to promote and accelerate protein folding. GroES binds to the apical surface of the GroEL ring, thereby capping the opening of the GroEL channel. The polypeptide is Co-chaperonin GroES (Bartonella quintana (strain Toulouse) (Rochalimaea quintana)).